The chain runs to 103 residues: Large ribosomal subunit protein uL24 (103 aa).

This sequence belongs to the universal ribosomal protein uL24 family. In terms of assembly, part of the 50S ribosomal subunit.

In terms of biological role, one of two assembly initiator proteins, it binds directly to the 5'-end of the 23S rRNA, where it nucleates assembly of the 50S subunit. One of the proteins that surrounds the polypeptide exit tunnel on the outside of the subunit. This is Large ribosomal subunit protein uL24 from Dehalococcoides mccartyi (strain ATCC BAA-2266 / KCTC 15142 / 195) (Dehalococcoides ethenogenes (strain 195)).